Consider the following 162-residue polypeptide: D-aminoacyl-tRNA deacylase (162 aa).

Positions 145-146 (GP) match the Gly-cisPro motif, important for rejection of L-amino acids motif.

This sequence belongs to the DTD family. Homodimer.

The protein resides in the cytoplasm. The enzyme catalyses glycyl-tRNA(Ala) + H2O = tRNA(Ala) + glycine + H(+). The catalysed reaction is a D-aminoacyl-tRNA + H2O = a tRNA + a D-alpha-amino acid + H(+). Functionally, an aminoacyl-tRNA editing enzyme that deacylates mischarged D-aminoacyl-tRNAs. Also deacylates mischarged glycyl-tRNA(Ala), protecting cells against glycine mischarging by AlaRS. Acts via tRNA-based rather than protein-based catalysis; rejects L-amino acids rather than detecting D-amino acids in the active site. By recycling D-aminoacyl-tRNA to D-amino acids and free tRNA molecules, this enzyme counteracts the toxicity associated with the formation of D-aminoacyl-tRNA entities in vivo and helps enforce protein L-homochirality. The polypeptide is D-aminoacyl-tRNA deacylase (Bifidobacterium longum (strain DJO10A)).